The chain runs to 423 residues: Adenylosuccinate synthetase (423 aa).

Residues 12-18 (GDEGKGK) and 40-42 (GHT) contribute to the GTP site. The active-site Proton acceptor is the Asp13. Positions 13 and 40 each coordinate Mg(2+). Residues 13-16 (DEGK), 38-41 (NAGH), Thr129, Arg143, Gln224, Thr239, and Arg303 each bind IMP. His41 acts as the Proton donor in catalysis. 299–305 (SVTGRQR) provides a ligand contact to substrate. Residues Arg305, 331–333 (KGD), and 412–414 (SVG) each bind GTP.

The protein belongs to the adenylosuccinate synthetase family. As to quaternary structure, homodimer. Mg(2+) is required as a cofactor.

It is found in the cytoplasm. It catalyses the reaction IMP + L-aspartate + GTP = N(6)-(1,2-dicarboxyethyl)-AMP + GDP + phosphate + 2 H(+). It functions in the pathway purine metabolism; AMP biosynthesis via de novo pathway; AMP from IMP: step 1/2. Its function is as follows. Plays an important role in the de novo pathway of purine nucleotide biosynthesis. Catalyzes the first committed step in the biosynthesis of AMP from IMP. This chain is Adenylosuccinate synthetase, found in Flavobacterium psychrophilum (strain ATCC 49511 / DSM 21280 / CIP 103535 / JIP02/86).